A 274-amino-acid polypeptide reads, in one-letter code: Penicillin-insensitive murein endopeptidase (274 aa).

An N-terminal signal peptide occupies residues 1 to 19; the sequence is MKKTALALLALLVSSASLA. 3 disulfide bridges follow: Cys44/Cys265, Cys187/Cys235, and Cys216/Cys223. Residues His110, His113, Asp120, Asp147, His150, and His211 each coordinate Zn(2+). The segment at 225–274 is disordered; it reads DQPLPPPGDGCGAELQSWFEPPEPGTTKPEKKTPPPLPPSCQALLDEHVL.

Belongs to the peptidase M74 family. Dimer. Zn(2+) is required as a cofactor.

It is found in the periplasm. Its function is as follows. Murein endopeptidase that cleaves the D-alanyl-meso-2,6-diamino-pimelyl amide bond that connects peptidoglycan strands. Likely plays a role in the removal of murein from the sacculus. In Citrobacter koseri (strain ATCC BAA-895 / CDC 4225-83 / SGSC4696), this protein is Penicillin-insensitive murein endopeptidase.